Reading from the N-terminus, the 413-residue chain is Phosphoribosylamine--glycine ligase (413 aa).

The ATP-grasp domain maps to 108–310 (KQLMDKYRIP…LMQLIIDLEN (203 aa)). 134–190 (VETCDLPIVIKKDGLAAGKGVIIAFTREDALDGVKKIYQEEKGKVVFESYLEGEEFS) serves as a coordination point for ATP. Residues Glu280 and Asn282 each contribute to the Mg(2+) site.

The protein belongs to the GARS family. Mg(2+) serves as cofactor. The cofactor is Mn(2+).

The enzyme catalyses 5-phospho-beta-D-ribosylamine + glycine + ATP = N(1)-(5-phospho-beta-D-ribosyl)glycinamide + ADP + phosphate + H(+). It participates in purine metabolism; IMP biosynthesis via de novo pathway; N(1)-(5-phospho-D-ribosyl)glycinamide from 5-phospho-alpha-D-ribose 1-diphosphate: step 2/2. The chain is Phosphoribosylamine--glycine ligase from Staphylococcus epidermidis (strain ATCC 12228 / FDA PCI 1200).